The chain runs to 439 residues: Probable E3 ubiquitin-protein ligase makorin-1 (439 aa).

3 C3H1-type zinc fingers span residues 18-45, 48-74, and 163-190; these read WTKH…HDLS, KQTM…HTKP, and EMKK…HGDV. Positions 73-118 are disordered; sequence KPSKQDEVPSSKPSMPLTAAPLAGTPEPVSDGPGGTTGAQEKPQGS. The segment at 191-218 is makorin-type Cys-His; it reads CDMCGLQVLHPSDTSQRSQHIRACIEAH. The segment at 236–290 adopts an RING-type zinc-finger fold; the sequence is CGVCMEVVFEKTNPSERRFGILSNCCHCYCLKCIRKWRSAKQFESKIIKSCPECR. Residues 319–348 form a C3H1-type 4 zinc finger; sequence GMGTKPCRYFDEGRGTCPFGANCFYKHAFP. The interval 352-371 is disordered; it reads LEEPQPQRRQNGSNGRNRNT. Low complexity predominate over residues 358–368; the sequence is QRRQNGSNGRN.

The catalysed reaction is S-ubiquitinyl-[E2 ubiquitin-conjugating enzyme]-L-cysteine + [acceptor protein]-L-lysine = [E2 ubiquitin-conjugating enzyme]-L-cysteine + N(6)-ubiquitinyl-[acceptor protein]-L-lysine.. Its pathway is protein modification; protein ubiquitination. In terms of biological role, E3 ubiquitin ligase catalyzing the covalent attachment of ubiquitin moieties onto substrate proteins. In Danio rerio (Zebrafish), this protein is Probable E3 ubiquitin-protein ligase makorin-1.